The chain runs to 921 residues: TRPM8 channel-associated factor 1 (921 aa).

Positions 542–841 (YCWMSTGLYI…TYLQLQEAFG (300 aa)) constitute a Peptidase M60 domain.

This sequence belongs to the TCAF family. As to quaternary structure, interacts with TRPM8 (via N-terminus and C-terminus domains); the interaction inhibits TRPM8 channel activity. Interacts with TRPV6.

It is found in the cell membrane. Its function is as follows. Positively regulates the plasma membrane cation channel TRPM8 activity. Involved in the recruitment of TRPM8 to the cell surface. Promotes prostate cancer cell migration inhibition in a TRPM8-dependent manner. In Bos taurus (Bovine), this protein is TRPM8 channel-associated factor 1.